The primary structure comprises 801 residues: Conserved oligomeric Golgi complex subunit 3 (801 aa).

A disordered region spans residues 470–489 (KTSLQGGNEDATTSDDNPDP). Positions 471–480 (TSLQGGNEDA) are enriched in polar residues. Residues S507 and S647 each carry the phosphoserine modification.

The protein belongs to the COG3 family. As to quaternary structure, component of the conserved oligomeric Golgi (COG or Sec34/Sec35) complex which consists of eight different proteins COG1-COG8.

The protein resides in the golgi apparatus membrane. Functionally, acts as a component of the peripheral membrane COG complex that is involved in intra-Golgi protein trafficking. COG is located at the cis- Golgi, and regulates tethering of retrograde intra-Golgi vesicles and possibly a number of other membrane trafficking events. COG3 is also involved in actin cytoskeleton organization. This Saccharomyces cerevisiae (strain ATCC 204508 / S288c) (Baker's yeast) protein is Conserved oligomeric Golgi complex subunit 3 (COG3).